A 476-amino-acid chain; its full sequence is FAD-dependent monooxygenase dpasE (476 aa).

Residues 1 to 21 (MSQPAFKIIIVGCSVTGLTLA) form the signal peptide. Glutamate 35, alanine 49, and arginine 109 together coordinate FAD. 2 N-linked (GlcNAc...) asparagine glycosylation sites follow: asparagine 190 and asparagine 219. Positions 308 and 321 each coordinate FAD. Residues 441–461 (GAGFWITAFLSLSLLAVAATM) traverse the membrane as a helical segment.

The protein belongs to the paxM FAD-dependent monooxygenase family. Requires FAD as cofactor.

The protein resides in the membrane. It functions in the pathway secondary metabolite biosynthesis; terpenoid biosynthesis. Its function is as follows. FAD-dependent monooxygenase; part of the gene cluster that mediates the biosynthesis of the diterpenoid pyrones subglutinols A and B. The first step of the pathway is the synthesis of the alpha-pyrone moiety by the polyketide synthase dpasA via condensation of one acetyl-CoA starter unit with 3 malonyl-CoA units and 2 methylations. The alpha-pyrone is then combined with geranylgeranyl pyrophosphate (GGPP) formed by the GGPP synthase dpasD through the action of the prenyltransferase dpasC to yield a linear alpha-pyrone diterpenoid. Subsequent steps in the diterpenoid pyrone biosynthetic pathway involve the decalin core formation, which is initiated by the epoxidation of the C10-C11 olefin by the FAD-dependent oxidoreductase dpasE, and is followed by a cyclization cascade catalyzed by the terpene cyclase dpasB. The FAD-linked oxidoreductase dpasF is then involved in tetrahydrofuran (THF) ring formation at the C5 unit to complete the formation of subglutinols A and B. DpasF possesses also an additional catalytic ability of multi-step oxidations to generate a new DDP analog with an enone system at the C5 named FDDP A. The polypeptide is FAD-dependent monooxygenase dpasE (Apiospora sacchari (Arthrinium sacchari)).